The following is a 426-amino-acid chain: Histidine--tRNA ligase (426 aa).

Belongs to the class-II aminoacyl-tRNA synthetase family. In terms of assembly, homodimer.

It localises to the cytoplasm. It catalyses the reaction tRNA(His) + L-histidine + ATP = L-histidyl-tRNA(His) + AMP + diphosphate + H(+). This chain is Histidine--tRNA ligase, found in Streptococcus pyogenes serotype M1.